A 193-amino-acid polypeptide reads, in one-letter code: Phosphoheptose isomerase (193 aa).

The SIS domain occupies 37–193; sequence LADSFKAGGK…QLIEKEMVKA (157 aa). 52–54 is a substrate binding site; that stretch reads NGG. Positions 61 and 65 each coordinate Zn(2+). Substrate is bound by residues Glu65, 93–94, 119–121, Ser124, and Gln172; these read ND and STS. Gln172 and His180 together coordinate Zn(2+).

This sequence belongs to the SIS family. GmhA subfamily. Homotetramer. Zn(2+) serves as cofactor.

Its subcellular location is the cytoplasm. The enzyme catalyses 2 D-sedoheptulose 7-phosphate = D-glycero-alpha-D-manno-heptose 7-phosphate + D-glycero-beta-D-manno-heptose 7-phosphate. It functions in the pathway carbohydrate biosynthesis; D-glycero-D-manno-heptose 7-phosphate biosynthesis; D-glycero-alpha-D-manno-heptose 7-phosphate and D-glycero-beta-D-manno-heptose 7-phosphate from sedoheptulose 7-phosphate: step 1/1. Its function is as follows. Catalyzes the isomerization of sedoheptulose 7-phosphate in D-glycero-D-manno-heptose 7-phosphate. This Serratia proteamaculans (strain 568) protein is Phosphoheptose isomerase.